A 279-amino-acid polypeptide reads, in one-letter code: Pleckstrin homology domain-containing family F member 1 (279 aa).

Residues 35–131 (VLLGEGVLTK…WISHIEECVR (97 aa)) form the PH domain. An FYVE-type zinc finger spans residues 152 to 212 (DKATDICMRC…VCSLCYRELA (61 aa)). 8 residues coordinate Zn(2+): Cys158, Cys161, Cys175, Cys178, Cys183, Cys186, Cys204, and Cys207. Positions 219-264 (EAKERFRGSPGQLTHLGSTMCGASSGDDDDSDEDREGSGDGDWPTQ) are disordered. Positions 244-253 (GDDDDSDEDR) are enriched in acidic residues.

Its subcellular location is the nucleus. The protein localises to the cytoplasm. It is found in the perinuclear region. The protein resides in the lysosome. In terms of biological role, may induce apoptosis through the lysosomal-mitochondrial pathway. Translocates to the lysosome initiating the permeabilization of lysosomal membrane (LMP) and resulting in the release of CTSD and CTSL to the cytoplasm. Triggers the caspase-independent apoptosis by altering mitochondrial membrane permeabilization (MMP) resulting in the release of PDCD8. In Rattus norvegicus (Rat), this protein is Pleckstrin homology domain-containing family F member 1 (Plekhf1).